Here is a 185-residue protein sequence, read N- to C-terminus: Tetrahydromethanopterin S-methyltransferase subunit A 2 (185 aa).

Over 1–21 (MVDKKVDKKPVPEDWPHIVGD) the chain is Cytoplasmic. Residues 22–38 (YVVGDAESPVAVVTLGS) form a helical membrane-spanning segment. The Extracellular segment spans residues 39 to 185 (HMEDEPVRAG…LNKNKPDENT (147 aa)). Residue H88 participates in 5-hydroxybenzimidazolylcob(I)amide binding.

It belongs to the MtrA family. In terms of assembly, the complex is composed of 8 subunits; MtrA, MtrB, MtrC, MtrD, MtrE, MtrF, MtrG and MtrH. The cofactor is 5-hydroxybenzimidazolylcob(I)amide.

It localises to the cell membrane. The catalysed reaction is 5-methyl-5,6,7,8-tetrahydromethanopterin + coenzyme M + 2 Na(+)(in) = 5,6,7,8-tetrahydromethanopterin + methyl-coenzyme M + 2 Na(+)(out). It participates in one-carbon metabolism; methanogenesis from CO(2); methyl-coenzyme M from 5,10-methylene-5,6,7,8-tetrahydromethanopterin: step 2/2. Part of a complex that catalyzes the formation of methyl-coenzyme M and tetrahydromethanopterin from coenzyme M and methyl-tetrahydromethanopterin. This is an energy-conserving, sodium-ion translocating step. This is Tetrahydromethanopterin S-methyltransferase subunit A 2 from Methanothermobacter marburgensis (strain ATCC BAA-927 / DSM 2133 / JCM 14651 / NBRC 100331 / OCM 82 / Marburg) (Methanobacterium thermoautotrophicum).